A 432-amino-acid polypeptide reads, in one-letter code: Adenylosuccinate synthetase (432 aa).

Residues 13 to 19 (GDEGKGK) and 41 to 43 (GHT) contribute to the GTP site. D14 (proton acceptor) is an active-site residue. 2 residues coordinate Mg(2+): D14 and G41. IMP contacts are provided by residues 14-17 (DEGK), 39-42 (NAGH), T130, R144, Q225, T240, and R304. The Proton donor role is filled by H42. 300–306 (ATTGRRR) contacts substrate. Residues R306, 332-334 (KLD), and 415-417 (STG) each bind GTP.

Belongs to the adenylosuccinate synthetase family. As to quaternary structure, homodimer. It depends on Mg(2+) as a cofactor.

It is found in the cytoplasm. The enzyme catalyses IMP + L-aspartate + GTP = N(6)-(1,2-dicarboxyethyl)-AMP + GDP + phosphate + 2 H(+). The protein operates within purine metabolism; AMP biosynthesis via de novo pathway; AMP from IMP: step 1/2. In terms of biological role, plays an important role in the de novo pathway of purine nucleotide biosynthesis. Catalyzes the first committed step in the biosynthesis of AMP from IMP. The polypeptide is Adenylosuccinate synthetase (Edwardsiella ictaluri (strain 93-146)).